A 912-amino-acid chain; its full sequence is Putative respiratory burst oxidase homolog protein J (912 aa).

Disordered regions lie at residues 1-51 and 73-112; these read MKNN…GGGI and WRKS…RTTS. The Cytoplasmic portion of the chain corresponds to 1-323; the sequence is MKNNKKVGTE…VVVTAELMYE (323 aa). Composition is skewed to polar residues over residues 29-44 and 78-87; these read SVKQ…NPES and NLGSPSTRKS. EF-hand-like regions lie at residues 147–155 and 181–193; these read AVDGRLPKD and RQIK…DKEQ. An EF-hand domain is found at 205-240; sequence DLDCRLQIFFDMCDKDGDGKLTEEEVKEVIVLSASA. Ca(2+) is bound by residues Asp-218, Asp-220, Asp-222, Lys-224, and Glu-229. Ser-294 carries the phosphoserine modification. Residues 324 to 344 traverse the membrane as a helical segment; sequence HWKKIWVVTLWLAVNVVLFMW. Residues 345–363 are Extracellular-facing; the sequence is KYEEFTTSPLYNITGRCLC. A helical membrane pass occupies residues 364–384; that stretch reads AAKGTAEILKLNMALILVPVL. Residues 366 to 523 form the Ferric oxidoreductase domain; sequence KGTAEILKLN…LLVIAYALLI (158 aa). The Cytoplasmic segment spans residues 385-410; sequence RRTLTFLRSTFLNHLIPFDDNINFHK. Residues 411–431 traverse the membrane as a helical segment; it reads LIAVAIAVISLLHTALHMLCN. Residues 432–458 are Extracellular-facing; it reads YPRLSSCPYNFYSDYAGNLLGAKQPTY. Residues 459-479 traverse the membrane as a helical segment; that stretch reads LGLMLTPVSVTGVLMIIFMGI. The Cytoplasmic segment spans residues 480-510; that stretch reads SFTLAMHYFRRNIVKLPIPFNRLAGFNSFWY. A helical transmembrane segment spans residues 511-531; it reads AHHLLVIAYALLIIHGYILII. Residues 532–697 lie on the Extracellular side of the membrane; it reads EKPWYQKTTW…PYGAPAQSYQ (166 aa). The 134-residue stretch at 562 to 695 folds into the FAD-binding FR-type domain; that stretch reads EHNHRVHIIK…KGPYGAPAQS (134 aa). Residues 698–718 form a helical membrane-spanning segment; it reads KFDILLLIGLGIGATPFISIL. Residues 719–912 are Cytoplasmic-facing; the sequence is KDMLNNLKPG…TRFTFHKENF (194 aa).

This sequence belongs to the RBOH (TC 5.B.1.3) family. Monomer and homodimer.

The protein resides in the membrane. In terms of biological role, calcium-dependent NADPH oxidase that generates superoxide. The chain is Putative respiratory burst oxidase homolog protein J (RBOHJ) from Arabidopsis thaliana (Mouse-ear cress).